We begin with the raw amino-acid sequence, 607 residues long: UvrABC system protein C (607 aa).

The GIY-YIG domain maps to 15 to 92; it reads SQPGSYQMKD…IKRYRPYFNI (78 aa). A UVR domain is found at 197–232; the sequence is GKAISDIKKKMKRASDSTEYELAADFRDRLKFIDQT.

The protein belongs to the UvrC family. As to quaternary structure, interacts with UvrB in an incision complex.

Its subcellular location is the cytoplasm. In terms of biological role, the UvrABC repair system catalyzes the recognition and processing of DNA lesions. UvrC both incises the 5' and 3' sides of the lesion. The N-terminal half is responsible for the 3' incision and the C-terminal half is responsible for the 5' incision. In Oenococcus oeni (strain ATCC BAA-331 / PSU-1), this protein is UvrABC system protein C.